Here is a 249-residue protein sequence, read N- to C-terminus: 4-hydroxy-tetrahydrodipicolinate reductase (249 aa).

NAD(+)-binding positions include 77–79 (ATT) and 101–104 (SYNT). H133 acts as the Proton donor/acceptor in catalysis. H134 provides a ligand contact to (S)-2,3,4,5-tetrahydrodipicolinate. K137 (proton donor) is an active-site residue. 143–144 (GT) lines the (S)-2,3,4,5-tetrahydrodipicolinate pocket.

This sequence belongs to the DapB family.

The protein localises to the cytoplasm. The catalysed reaction is (S)-2,3,4,5-tetrahydrodipicolinate + NAD(+) + H2O = (2S,4S)-4-hydroxy-2,3,4,5-tetrahydrodipicolinate + NADH + H(+). It catalyses the reaction (S)-2,3,4,5-tetrahydrodipicolinate + NADP(+) + H2O = (2S,4S)-4-hydroxy-2,3,4,5-tetrahydrodipicolinate + NADPH + H(+). Its pathway is amino-acid biosynthesis; L-lysine biosynthesis via DAP pathway; (S)-tetrahydrodipicolinate from L-aspartate: step 4/4. In terms of biological role, catalyzes the conversion of 4-hydroxy-tetrahydrodipicolinate (HTPA) to tetrahydrodipicolinate. In Exiguobacterium sp. (strain ATCC BAA-1283 / AT1b), this protein is 4-hydroxy-tetrahydrodipicolinate reductase.